The chain runs to 155 residues: Small ribosomal subunit protein uS8m (155 aa).

It belongs to the universal ribosomal protein uS8 family. Component of the mitochondrial small ribosomal subunit (mt-SSU). Mature yeast 74S mitochondrial ribosomes consist of a small (37S) and a large (54S) subunit. The 37S small subunit contains a 15S ribosomal RNA (15S mt-rRNA) and 34 different proteins. The 54S large subunit contains a 21S rRNA (21S mt-rRNA) and 46 different proteins.

Its subcellular location is the mitochondrion. Component of the mitochondrial ribosome (mitoribosome), a dedicated translation machinery responsible for the synthesis of mitochondrial genome-encoded proteins, including at least some of the essential transmembrane subunits of the mitochondrial respiratory chain. The mitoribosomes are attached to the mitochondrial inner membrane and translation products are cotranslationally integrated into the membrane. The chain is Small ribosomal subunit protein uS8m (MRPS8) from Saccharomyces cerevisiae (strain ATCC 204508 / S288c) (Baker's yeast).